A 325-amino-acid chain; its full sequence is Tetraacyldisaccharide 4'-kinase (325 aa).

Residue 55–62 (TAGGNGKT) participates in ATP binding.

This sequence belongs to the LpxK family.

It carries out the reaction a lipid A disaccharide + ATP = a lipid IVA + ADP + H(+). It participates in glycolipid biosynthesis; lipid IV(A) biosynthesis; lipid IV(A) from (3R)-3-hydroxytetradecanoyl-[acyl-carrier-protein] and UDP-N-acetyl-alpha-D-glucosamine: step 6/6. Functionally, transfers the gamma-phosphate of ATP to the 4'-position of a tetraacyldisaccharide 1-phosphate intermediate (termed DS-1-P) to form tetraacyldisaccharide 1,4'-bis-phosphate (lipid IVA). The polypeptide is Tetraacyldisaccharide 4'-kinase (Salmonella choleraesuis (strain SC-B67)).